A 344-amino-acid polypeptide reads, in one-letter code: Phenylalanine--tRNA ligase alpha subunit (344 aa).

Position 256 (E256) interacts with Mg(2+).

Belongs to the class-II aminoacyl-tRNA synthetase family. Phe-tRNA synthetase alpha subunit type 1 subfamily. In terms of assembly, tetramer of two alpha and two beta subunits. Mg(2+) is required as a cofactor.

The protein resides in the cytoplasm. It carries out the reaction tRNA(Phe) + L-phenylalanine + ATP = L-phenylalanyl-tRNA(Phe) + AMP + diphosphate + H(+). The protein is Phenylalanine--tRNA ligase alpha subunit of Bacillus mycoides (strain KBAB4) (Bacillus weihenstephanensis).